A 234-amino-acid polypeptide reads, in one-letter code: Thiamine import ATP-binding protein ThiQ (234 aa).

The 229-residue stretch at 2–230 (LRFSDVKYRY…EKPPELTQYL (229 aa)) folds into the ABC transporter domain. 32-39 (GPSGAGKS) is an ATP binding site.

This sequence belongs to the ABC transporter superfamily. Thiamine importer (TC 3.A.1.19.1) family. In terms of assembly, the complex is composed of two ATP-binding proteins (ThiQ), two transmembrane proteins (ThiP) and a solute-binding protein (ThiB).

The protein localises to the cell inner membrane. The enzyme catalyses thiamine(out) + ATP + H2O = thiamine(in) + ADP + phosphate + H(+). Its function is as follows. Part of the ABC transporter complex ThiBPQ involved in thiamine import. Responsible for energy coupling to the transport system. This chain is Thiamine import ATP-binding protein ThiQ, found in Aliivibrio fischeri (strain ATCC 700601 / ES114) (Vibrio fischeri).